Consider the following 375-residue polypeptide: Probable aspartate aminotransferase (375 aa).

Residues Gly31 and Asn165 each coordinate L-aspartate. An N6-(pyridoxal phosphate)lysine modification is found at Lys223. Residue Arg353 participates in L-aspartate binding.

It belongs to the class-I pyridoxal-phosphate-dependent aminotransferase family. Homodimer. It depends on pyridoxal 5'-phosphate as a cofactor.

The protein localises to the cytoplasm. The catalysed reaction is L-aspartate + 2-oxoglutarate = oxaloacetate + L-glutamate. This chain is Probable aspartate aminotransferase, found in Methanocaldococcus jannaschii (strain ATCC 43067 / DSM 2661 / JAL-1 / JCM 10045 / NBRC 100440) (Methanococcus jannaschii).